The chain runs to 271 residues: Cartilage-associated protein (271 aa).

The signal sequence occupies residues 1–15; that stretch reads MWRTLLAALLATAGA. Asn-76 is a glycosylation site (N-linked (GlcNAc...) asparagine).

It belongs to the leprecan family. As to expression, found in articular chondrocytes. Expressed in a variety of tissues.

The protein resides in the secreted. The protein localises to the extracellular space. It localises to the extracellular matrix. Its function is as follows. Necessary for efficient 3-hydroxylation of fibrillar collagen prolyl residues. The sequence is that of Cartilage-associated protein (CRTAP) from Gallus gallus (Chicken).